A 332-amino-acid chain; its full sequence is 4-hydroxy-3-methylbut-2-enyl diphosphate reductase (332 aa).

C34 provides a ligand contact to [4Fe-4S] cluster. (2E)-4-hydroxy-3-methylbut-2-enyl diphosphate-binding residues include H63 and H96. Dimethylallyl diphosphate-binding residues include H63 and H96. Isopentenyl diphosphate contacts are provided by H63 and H96. C118 contacts [4Fe-4S] cluster. H146 provides a ligand contact to (2E)-4-hydroxy-3-methylbut-2-enyl diphosphate. H146 is a dimethylallyl diphosphate binding site. H146 contributes to the isopentenyl diphosphate binding site. Residue E148 is the Proton donor of the active site. Residue T186 coordinates (2E)-4-hydroxy-3-methylbut-2-enyl diphosphate. A [4Fe-4S] cluster-binding site is contributed by C216. Positions 244, 245, 246, and 289 each coordinate (2E)-4-hydroxy-3-methylbut-2-enyl diphosphate. Residues S244, S245, N246, and S289 each contribute to the dimethylallyl diphosphate site. Residues S244, S245, N246, and S289 each coordinate isopentenyl diphosphate.

It belongs to the IspH family. Requires [4Fe-4S] cluster as cofactor.

It catalyses the reaction isopentenyl diphosphate + 2 oxidized [2Fe-2S]-[ferredoxin] + H2O = (2E)-4-hydroxy-3-methylbut-2-enyl diphosphate + 2 reduced [2Fe-2S]-[ferredoxin] + 2 H(+). It carries out the reaction dimethylallyl diphosphate + 2 oxidized [2Fe-2S]-[ferredoxin] + H2O = (2E)-4-hydroxy-3-methylbut-2-enyl diphosphate + 2 reduced [2Fe-2S]-[ferredoxin] + 2 H(+). It participates in isoprenoid biosynthesis; dimethylallyl diphosphate biosynthesis; dimethylallyl diphosphate from (2E)-4-hydroxy-3-methylbutenyl diphosphate: step 1/1. It functions in the pathway isoprenoid biosynthesis; isopentenyl diphosphate biosynthesis via DXP pathway; isopentenyl diphosphate from 1-deoxy-D-xylulose 5-phosphate: step 6/6. Functionally, catalyzes the conversion of 1-hydroxy-2-methyl-2-(E)-butenyl 4-diphosphate (HMBPP) into a mixture of isopentenyl diphosphate (IPP) and dimethylallyl diphosphate (DMAPP). Acts in the terminal step of the DOXP/MEP pathway for isoprenoid precursor biosynthesis. The sequence is that of 4-hydroxy-3-methylbut-2-enyl diphosphate reductase from Mycobacterium leprae (strain TN).